A 589-amino-acid chain; its full sequence is Protein PAF1 homolog (589 aa).

The span at 1-54 (MASYRPPYPPLPQPPSQNSLAPPPPPPSLPPPVPPPPPSHQPYSYPPPPPPPPH) shows a compositional bias: pro residues. Disordered stretches follow at residues 1-180 (MASY…PLLT) and 542-589 (GVYS…DYSE). Residues 55–65 (AYYQQGPHYPQ) are compositionally biased toward low complexity. The span at 71-87 (APPPPPPPSAPPPLVPD) shows a compositional bias: pro residues. The segment covering 88–116 (PPRHQGPNDHEKGASKQVGRRERAKPDPS) has biased composition (basic and acidic residues). A compositionally biased stretch (basic residues) spans 117 to 127 (KHHHRSHLPHS). Residues 126–159 (HSKKIETEEERRLRKKRELEKQRQDEKHRQQMKN) are a coiled coil. Residues 128–154 (KKIETEEERRLRKKRELEKQRQDEKHR) are compositionally biased toward basic and acidic residues.

Belongs to the PAF1 family. In terms of assembly, component of the nuclear PAF1 complex (PAF1C), which consists of VIP2/ELF7/PAF1, VIP3/SKI8/WDR61, VIP4/LEO1, VIP5/RTF1, VIP6/ELF8/CTR9 and CDC73. In terms of tissue distribution, expressed in roots, leaves and shoot apex.

The protein localises to the nucleus. Component of the PAF1 complex (PAF1C) which is involved in histone modifications such as methylation on histone H3 'Lys-4' (H3K4me3). Involved in regulation of flowering time. Required for the expression of the flowering repressors and MAD-box genes FLC, AGL27/FLM and AGL31/MAF2. Required for histone H3 trimethylation on 'Lys-4' H3K4me3 at the FLC and AGL27/FLM loci. Involved in the control of seed dormancy and germination. In Arabidopsis thaliana (Mouse-ear cress), this protein is Protein PAF1 homolog.